The primary structure comprises 192 residues: GTP cyclohydrolase-2 (192 aa).

50 to 54 (RLHSE) is a GTP binding site. Zn(2+)-binding residues include Cys-55, Cys-66, and Cys-68. GTP contacts are provided by residues 92 to 94 (EGR) and Thr-114. The active-site Proton acceptor is Asp-126. Arg-128 (nucleophile) is an active-site residue. The GTP site is built by Thr-149 and Lys-154.

This sequence belongs to the GTP cyclohydrolase II family. It depends on Zn(2+) as a cofactor.

It carries out the reaction GTP + 4 H2O = 2,5-diamino-6-hydroxy-4-(5-phosphoribosylamino)-pyrimidine + formate + 2 phosphate + 3 H(+). Its pathway is cofactor biosynthesis; riboflavin biosynthesis; 5-amino-6-(D-ribitylamino)uracil from GTP: step 1/4. In terms of biological role, catalyzes the conversion of GTP to 2,5-diamino-6-ribosylamino-4(3H)-pyrimidinone 5'-phosphate (DARP), formate and pyrophosphate. This chain is GTP cyclohydrolase-2, found in Helicobacter pylori (strain J99 / ATCC 700824) (Campylobacter pylori J99).